We begin with the raw amino-acid sequence, 404 residues long: Phosphoglycerate kinase (404 aa).

Substrate-binding positions include 22 to 24, arginine 37, 60 to 63, arginine 119, and arginine 156; these read DLN and HLGR. Residues lysine 206, glycine 302, glutamate 333, and 359-362 contribute to the ATP site; that span reads GGDS.

The protein belongs to the phosphoglycerate kinase family. Monomer.

The protein localises to the cytoplasm. The catalysed reaction is (2R)-3-phosphoglycerate + ATP = (2R)-3-phospho-glyceroyl phosphate + ADP. The protein operates within carbohydrate degradation; glycolysis; pyruvate from D-glyceraldehyde 3-phosphate: step 2/5. The sequence is that of Phosphoglycerate kinase from Clavibacter sepedonicus (Clavibacter michiganensis subsp. sepedonicus).